We begin with the raw amino-acid sequence, 442 residues long: MREIVCVQAGQCGNQIGSKFWEVISDEHGVDPTGTYQGDSDLQLERINVYFDEATGGRYVPRAVLIDLEPGTMDSVRAGPYGQIFRPDNFIFGQSGAGNNWAKGHYTEGAELIDSVLDVCRKEAESCDCLQGFQICHSLGGGTGSGMGTLLISKLREEYPDRIMMTFSIIPSPKVSDTVVEPYNTTLSVHQLVENSDESMCIDNEALYDICFRTLKLTTPTFGDLNHLVSAVVSGVTCCLRFPGQLNSDLRKLAVNLVPFPRLHFFMMGFAPLSSRGSQQYRGLSVPDVTQQMFDAKNMMQAADPAHGRYLTASALFRGRMSTKEVDEQMLNVQNKNSSYFIEWIPNNIKSSICDIPPKGLKMAVTFVGNNTCIQEMFRRVGEQFTAMFRRKAFLHWYTGEGMDEMEFTEAESNMNDLVSEYQQYQDATIEEEGEFDEEEQY.

8 residues coordinate GTP: Gln11, Glu69, Ser138, Gly142, Thr143, Gly144, Asn204, and Asn226. Residue Glu69 participates in Mg(2+) binding.

The protein belongs to the tubulin family. As to quaternary structure, dimer of alpha and beta chains. A typical microtubule is a hollow water-filled tube with an outer diameter of 25 nm and an inner diameter of 15 nM. Alpha-beta heterodimers associate head-to-tail to form protofilaments running lengthwise along the microtubule wall with the beta-tubulin subunit facing the microtubule plus end conferring a structural polarity. Microtubules usually have 13 protofilaments but different protofilament numbers can be found in some organisms and specialized cells. Mg(2+) serves as cofactor.

It is found in the cytoplasm. Its subcellular location is the cytoskeleton. Its function is as follows. Tubulin is the major constituent of microtubules, a cylinder consisting of laterally associated linear protofilaments composed of alpha- and beta-tubulin heterodimers. Microtubules grow by the addition of GTP-tubulin dimers to the microtubule end, where a stabilizing cap forms. Below the cap, tubulin dimers are in GDP-bound state, owing to GTPase activity of alpha-tubulin. The chain is Tubulin beta chain from Trypanosoma cruzi.